We begin with the raw amino-acid sequence, 529 residues long: Bifunctional purine biosynthesis protein PurH (529 aa).

One can recognise an MGS-like domain in the interval 3-149 (DRIPLKRALI…KNHAFVTVVV (147 aa)).

This sequence belongs to the PurH family.

It carries out the reaction (6R)-10-formyltetrahydrofolate + 5-amino-1-(5-phospho-beta-D-ribosyl)imidazole-4-carboxamide = 5-formamido-1-(5-phospho-D-ribosyl)imidazole-4-carboxamide + (6S)-5,6,7,8-tetrahydrofolate. The catalysed reaction is IMP + H2O = 5-formamido-1-(5-phospho-D-ribosyl)imidazole-4-carboxamide. Its pathway is purine metabolism; IMP biosynthesis via de novo pathway; 5-formamido-1-(5-phospho-D-ribosyl)imidazole-4-carboxamide from 5-amino-1-(5-phospho-D-ribosyl)imidazole-4-carboxamide (10-formyl THF route): step 1/1. It functions in the pathway purine metabolism; IMP biosynthesis via de novo pathway; IMP from 5-formamido-1-(5-phospho-D-ribosyl)imidazole-4-carboxamide: step 1/1. In Paracoccus denitrificans (strain Pd 1222), this protein is Bifunctional purine biosynthesis protein PurH.